We begin with the raw amino-acid sequence, 199 residues long: V-type proton ATPase subunit E (199 aa).

It belongs to the V-ATPase E subunit family.

Functionally, produces ATP from ADP in the presence of a proton gradient across the membrane. This chain is V-type proton ATPase subunit E, found in Clostridium botulinum (strain 657 / Type Ba4).